A 397-amino-acid polypeptide reads, in one-letter code: Phosphoglycerate kinase (397 aa).

Substrate is bound by residues 22–24 (DLN), arginine 37, 60–63 (HFGR), arginine 119, and arginine 152. Residues lysine 202, glutamate 324, and 354–357 (GGDT) each bind ATP.

The protein belongs to the phosphoglycerate kinase family. Monomer.

It localises to the cytoplasm. It catalyses the reaction (2R)-3-phosphoglycerate + ATP = (2R)-3-phospho-glyceroyl phosphate + ADP. It participates in carbohydrate degradation; glycolysis; pyruvate from D-glyceraldehyde 3-phosphate: step 2/5. In Zymomonas mobilis subsp. mobilis (strain ATCC 31821 / ZM4 / CP4), this protein is Phosphoglycerate kinase (pgk).